The chain runs to 191 residues: uncharacterized protein (191 aa).

This is an uncharacterized protein from Bacillus subtilis (strain 168).